Here is a 567-residue protein sequence, read N- to C-terminus: Urease subunit alpha (567 aa).

The Urease domain maps to 129-567; that stretch reads GGIDAHIHFI…LPLAQLYCLF (439 aa). 3 residues coordinate Ni(2+): His-134, His-136, and Lys-217. Lys-217 is modified (N6-carboxylysine). Position 219 (His-219) interacts with substrate. Residues His-246 and His-272 each contribute to the Ni(2+) site. The active-site Proton donor is His-320. Asp-360 provides a ligand contact to Ni(2+).

The protein belongs to the metallo-dependent hydrolases superfamily. Urease alpha subunit family. In terms of assembly, heterotrimer of UreA (gamma), UreB (beta) and UreC (alpha) subunits. Three heterotrimers associate to form the active enzyme. Ni cation serves as cofactor. Carboxylation allows a single lysine to coordinate two nickel ions.

The protein resides in the cytoplasm. It carries out the reaction urea + 2 H2O + H(+) = hydrogencarbonate + 2 NH4(+). It participates in nitrogen metabolism; urea degradation; CO(2) and NH(3) from urea (urease route): step 1/1. In Alteromonas mediterranea (strain DSM 17117 / CIP 110805 / LMG 28347 / Deep ecotype), this protein is Urease subunit alpha.